Here is a 613-residue protein sequence, read N- to C-terminus: Dihydroxy-acid dehydratase (613 aa).

Position 81 (aspartate 81) interacts with Mg(2+). A [2Fe-2S] cluster-binding site is contributed by cysteine 122. Aspartate 123 and lysine 124 together coordinate Mg(2+). The residue at position 124 (lysine 124) is an N6-carboxylysine. [2Fe-2S] cluster is bound at residue cysteine 197. Mg(2+) is bound at residue glutamate 493. Serine 519 functions as the Proton acceptor in the catalytic mechanism.

Belongs to the IlvD/Edd family. In terms of assembly, homodimer. Requires [2Fe-2S] cluster as cofactor. Mg(2+) serves as cofactor.

It carries out the reaction (2R)-2,3-dihydroxy-3-methylbutanoate = 3-methyl-2-oxobutanoate + H2O. The enzyme catalyses (2R,3R)-2,3-dihydroxy-3-methylpentanoate = (S)-3-methyl-2-oxopentanoate + H2O. It functions in the pathway amino-acid biosynthesis; L-isoleucine biosynthesis; L-isoleucine from 2-oxobutanoate: step 3/4. It participates in amino-acid biosynthesis; L-valine biosynthesis; L-valine from pyruvate: step 3/4. Functions in the biosynthesis of branched-chain amino acids. Catalyzes the dehydration of (2R,3R)-2,3-dihydroxy-3-methylpentanoate (2,3-dihydroxy-3-methylvalerate) into 2-oxo-3-methylpentanoate (2-oxo-3-methylvalerate) and of (2R)-2,3-dihydroxy-3-methylbutanoate (2,3-dihydroxyisovalerate) into 2-oxo-3-methylbutanoate (2-oxoisovalerate), the penultimate precursor to L-isoleucine and L-valine, respectively. The protein is Dihydroxy-acid dehydratase of Corynebacterium glutamicum (strain R).